The primary structure comprises 302 residues: MNIPLRIGGCASGPGCGDGEGSVQVATDPLLAIETAKVFAVYGKGGIGKSTTSSNLSAAFSKLGKRVLQIGCDPKHDSTFTLTKRFVPTVIDVLESVNFHAEELRAEDFIFEGYNGVMCVEAGGPPAGAGCGGYVVGQTVKLLKAHHLLEDTDVVIFDVLGDVVCGGFAAPLQFADRTLIVCANDFDSIFAMNRIVAAIASKAKNYKVRLGGVIANRSAELDQIDNYNNRVGLKTMAHFRDLDAIRRSRLKKSVIFEMDPSPEILAVQAEYMHLAETLWAGTEPLDAMPLKDREIFDLLGYD.

ATP is bound by residues Gly-46 to Thr-51 and Lys-75. Ser-50 serves as a coordination point for Mg(2+). 2 residues coordinate [4Fe-4S] cluster: Cys-131 and Cys-165. ATP is bound at residue Asn-216–Arg-217.

Belongs to the NifH/BchL/ChlL family. Homodimer. Protochlorophyllide reductase is composed of three subunits; BchL, BchN and BchB. [4Fe-4S] cluster serves as cofactor.

It carries out the reaction chlorophyllide a + oxidized 2[4Fe-4S]-[ferredoxin] + 2 ADP + 2 phosphate = protochlorophyllide a + reduced 2[4Fe-4S]-[ferredoxin] + 2 ATP + 2 H2O. The protein operates within porphyrin-containing compound metabolism; bacteriochlorophyll biosynthesis (light-independent). Functionally, component of the dark-operative protochlorophyllide reductase (DPOR) that uses Mg-ATP and reduced ferredoxin to reduce ring D of protochlorophyllide (Pchlide) to form chlorophyllide a (Chlide). This reaction is light-independent. The L component serves as a unique electron donor to the NB-component of the complex, and binds Mg-ATP. This chain is Light-independent protochlorophyllide reductase iron-sulfur ATP-binding protein, found in Methylocella silvestris (strain DSM 15510 / CIP 108128 / LMG 27833 / NCIMB 13906 / BL2).